The chain runs to 153 residues: Small ribosomal subunit protein uS5c (153 aa).

The S5 DRBM domain maps to 11 to 74; it reads WQERVIQIRR…VDAKKQLINI (64 aa).

It belongs to the universal ribosomal protein uS5 family. In terms of assembly, part of the 30S ribosomal subunit. Contacts protein S4.

The protein resides in the plastid. The protein localises to the chloroplast. Its function is as follows. With S4 and S12 plays an important role in translational accuracy. The sequence is that of Small ribosomal subunit protein uS5c (rps5) from Cyanidioschyzon merolae (strain NIES-3377 / 10D) (Unicellular red alga).